Here is a 160-residue protein sequence, read N- to C-terminus: Cytochrome c-type biogenesis protein CcmE (160 aa).

Over 1-8 (MNPRRKNR) the chain is Cytoplasmic. The helical; Signal-anchor for type II membrane protein transmembrane segment at 9–29 (LILVMLVLVGLGLATALVMYA) threads the bilayer. The Periplasmic portion of the chain corresponds to 30–160 (LRSNIDLFYT…AVGDNSVRPS (131 aa)). The heme site is built by His130 and Tyr134. Over residues 133–148 (KYTPPEIEDAMKKDHP) the composition is skewed to basic and acidic residues. A disordered region spans residues 133–160 (KYTPPEIEDAMKKDHPAQAVGDNSVRPS).

This sequence belongs to the CcmE/CycJ family.

Its subcellular location is the cell inner membrane. In terms of biological role, heme chaperone required for the biogenesis of c-type cytochromes. Transiently binds heme delivered by CcmC and transfers the heme to apo-cytochromes in a process facilitated by CcmF and CcmH. The protein is Cytochrome c-type biogenesis protein CcmE of Erwinia tasmaniensis (strain DSM 17950 / CFBP 7177 / CIP 109463 / NCPPB 4357 / Et1/99).